Here is a 523-residue protein sequence, read N- to C-terminus: MFS-type transporter R5 (523 aa).

The segment at Gln-19 to Glu-42 is disordered. Residues Asn-21–Ser-38 are compositionally biased toward polar residues. Residues Asn-35, Asn-94, and Asn-143 are each glycosylated (N-linked (GlcNAc...) asparagine). 2 consecutive transmembrane segments (helical) span residues Ala-183–Leu-203 and Ala-211–Phe-231. N-linked (GlcNAc...) asparagine glycosylation is found at Asn-235 and Asn-250. Transmembrane regions (helical) follow at residues Phe-291–Phe-311, Tyr-319–Leu-339, Leu-381–Leu-401, Val-408–Ala-428, Ala-443–Val-463, and Ile-470–Leu-490.

Belongs to the major facilitator superfamily.

The protein localises to the membrane. Its function is as follows. MFS-type transporter; part of the gene cluster that mediates the biosynthesis of squalestatin S1 (SQS1, also known as zaragozic acid A), a heavily oxidized fungal polyketide that offers potent cholesterol lowering activity by targeting squalene synthase (SS). This is MFS-type transporter R5 from Phoma sp. (strain ATCC 20986 / MF5453).